The primary structure comprises 376 residues: 23S rRNA (uracil(747)-C(5))-methyltransferase RlmC (376 aa).

Positions 3, 11, 14, and 88 each coordinate [4Fe-4S] cluster. 4 residues coordinate S-adenosyl-L-methionine: Gln-213, Phe-242, Glu-263, and Asn-308. Cys-335 serves as the catalytic Nucleophile.

The protein belongs to the class I-like SAM-binding methyltransferase superfamily. RNA M5U methyltransferase family. RlmC subfamily.

It carries out the reaction uridine(747) in 23S rRNA + S-adenosyl-L-methionine = 5-methyluridine(747) in 23S rRNA + S-adenosyl-L-homocysteine + H(+). Its function is as follows. Catalyzes the formation of 5-methyl-uridine at position 747 (m5U747) in 23S rRNA. The sequence is that of 23S rRNA (uracil(747)-C(5))-methyltransferase RlmC from Vibrio vulnificus (strain YJ016).